Here is a 372-residue protein sequence, read N- to C-terminus: Lipoyl synthase, mitochondrial (372 aa).

The N-terminal 27 residues, 1–27 (MSLRCGGAVRTVGPRVFGRYVFSPVRE), are a transit peptide targeting the mitochondrion. [4Fe-4S] cluster is bound by residues Cys-106, Cys-111, Cys-117, Cys-137, Cys-141, Cys-144, and Ser-352. A Radical SAM core domain is found at 122–341 (EYATATATIM…EKVGNELGFH (220 aa)).

The protein belongs to the radical SAM superfamily. Lipoyl synthase family. Requires [4Fe-4S] cluster as cofactor.

It is found in the mitochondrion. It carries out the reaction [[Fe-S] cluster scaffold protein carrying a second [4Fe-4S](2+) cluster] + N(6)-octanoyl-L-lysyl-[protein] + 2 oxidized [2Fe-2S]-[ferredoxin] + 2 S-adenosyl-L-methionine + 4 H(+) = [[Fe-S] cluster scaffold protein] + N(6)-[(R)-dihydrolipoyl]-L-lysyl-[protein] + 4 Fe(3+) + 2 hydrogen sulfide + 2 5'-deoxyadenosine + 2 L-methionine + 2 reduced [2Fe-2S]-[ferredoxin]. It participates in protein modification; protein lipoylation via endogenous pathway; protein N(6)-(lipoyl)lysine from octanoyl-[acyl-carrier-protein]: step 2/2. Catalyzes the radical-mediated insertion of two sulfur atoms into the C-6 and C-8 positions of the octanoyl moiety bound to the lipoyl domains of lipoate-dependent enzymes, thereby converting the octanoylated domains into lipoylated derivatives. In Bos taurus (Bovine), this protein is Lipoyl synthase, mitochondrial.